Reading from the N-terminus, the 258-residue chain is Acyl-[acyl-carrier-protein]--UDP-N-acetylglucosamine O-acyltransferase (258 aa).

This sequence belongs to the transferase hexapeptide repeat family. LpxA subfamily. In terms of assembly, homotrimer.

It localises to the cytoplasm. The enzyme catalyses a (3R)-hydroxyacyl-[ACP] + UDP-N-acetyl-alpha-D-glucosamine = a UDP-3-O-[(3R)-3-hydroxyacyl]-N-acetyl-alpha-D-glucosamine + holo-[ACP]. It participates in glycolipid biosynthesis; lipid IV(A) biosynthesis; lipid IV(A) from (3R)-3-hydroxytetradecanoyl-[acyl-carrier-protein] and UDP-N-acetyl-alpha-D-glucosamine: step 1/6. Functionally, involved in the biosynthesis of lipid A, a phosphorylated glycolipid that anchors the lipopolysaccharide to the outer membrane of the cell. The protein is Acyl-[acyl-carrier-protein]--UDP-N-acetylglucosamine O-acyltransferase of Neisseria gonorrhoeae (strain ATCC 700825 / FA 1090).